The chain runs to 344 residues: Anthranilate phosphoribosyltransferase (344 aa).

Residues glycine 86, 89 to 90 (GD), threonine 94, 96 to 99 (NIST), 114 to 122 (KHGNKSASG), and serine 126 each bind 5-phospho-alpha-D-ribose 1-diphosphate. Anthranilate is bound at residue glycine 86. Residue serine 98 participates in Mg(2+) binding. Residue asparagine 117 participates in anthranilate binding. Residue arginine 172 participates in anthranilate binding. 2 residues coordinate Mg(2+): aspartate 231 and glutamate 232.

Belongs to the anthranilate phosphoribosyltransferase family. As to quaternary structure, homodimer. It depends on Mg(2+) as a cofactor.

It catalyses the reaction N-(5-phospho-beta-D-ribosyl)anthranilate + diphosphate = 5-phospho-alpha-D-ribose 1-diphosphate + anthranilate. The protein operates within amino-acid biosynthesis; L-tryptophan biosynthesis; L-tryptophan from chorismate: step 2/5. Its function is as follows. Catalyzes the transfer of the phosphoribosyl group of 5-phosphorylribose-1-pyrophosphate (PRPP) to anthranilate to yield N-(5'-phosphoribosyl)-anthranilate (PRA). The chain is Anthranilate phosphoribosyltransferase from Prochlorococcus marinus (strain MIT 9301).